The primary structure comprises 224 residues: MCGRFTLFSEFDDIIEQFNIDQFLPEGEYHPSYNVAPSQNILTIINDGSNNRLGKLRWGLIPPWAKDEKIGYKMINARAETLSEKPSFRKPLVSKRCIIPADSFYEWKRLDPKTKIPMRIKLKSSNLFAFAGLYEKWNTPEGNPLYTCTIITTKPNELMEDIHDRMPVILTDENEKEWLNPKNTDPDYLQSLLQPYDADDMEAYQVSSLVNSPKNNSPELIESH.

Cysteine 2 (nucleophile) is an active-site residue. At cysteine 2 the chain carries Thiazolidine linkage to a ring-opened DNA abasic site. Glutamate 106 is a catalytic residue.

It belongs to the SOS response-associated peptidase family.

Formation and reversal of DNA-protein cross-link depends on DNA context. Catalyzes formation of the thiazolidine linkage in presence of abasic sites in single-stranded DNA. Mediates the reversal of the thiazolidine cross-link in presence of double stranded DNA. Functionally, sensor of abasic sites in single-stranded DNA (ssDNA) required to preserve genome integrity by promoting error-free repair of abasic sites. Recognizes and binds abasic sites in ssDNA at replication forks and chemically modifies the lesion by forming a covalent cross-link with DNA: forms a stable thiazolidine linkage between a ring-opened abasic site and the alpha-amino and sulfhydryl substituents of its N-terminal catalytic cysteine residue. The DNA-protein cross-link is then reversed: able to catalyze the reversal of the thiazolidine cross-link and cycle between a cross-link and a non-cross-linked state depending on DNA context: mediates self-reversal of the thiazolidine cross-link in double stranded DNA. May act as a protease: mediates autocatalytic processing of its N-terminal methionine in order to expose the catalytic cysteine. The sequence is that of Abasic site processing protein YoqW (yoqW) from Bacillus subtilis (strain 168).